The primary structure comprises 316 residues: Transaldolase (316 aa).

Residue Lys-127 is the Schiff-base intermediate with substrate of the active site.

It belongs to the transaldolase family. Type 2 subfamily.

Its subcellular location is the cytoplasm. It carries out the reaction D-sedoheptulose 7-phosphate + D-glyceraldehyde 3-phosphate = D-erythrose 4-phosphate + beta-D-fructose 6-phosphate. Its pathway is carbohydrate degradation; pentose phosphate pathway; D-glyceraldehyde 3-phosphate and beta-D-fructose 6-phosphate from D-ribose 5-phosphate and D-xylulose 5-phosphate (non-oxidative stage): step 2/3. Transaldolase is important for the balance of metabolites in the pentose-phosphate pathway. The polypeptide is Transaldolase (tal) (Helicobacter pylori (strain ATCC 700392 / 26695) (Campylobacter pylori)).